We begin with the raw amino-acid sequence, 84 residues long: Small ribosomal subunit protein uS17 (84 aa).

This sequence belongs to the universal ribosomal protein uS17 family. Part of the 30S ribosomal subunit.

Functionally, one of the primary rRNA binding proteins, it binds specifically to the 5'-end of 16S ribosomal RNA. The chain is Small ribosomal subunit protein uS17 from Proteus mirabilis (strain HI4320).